A 339-amino-acid polypeptide reads, in one-letter code: Ketol-acid reductoisomerase (NADP(+)) (339 aa).

In terms of domain architecture, KARI N-terminal Rossmann spans 1 to 182 (MRVYYDRDAD…GGGRSGVIET (182 aa)). NADP(+) contacts are provided by residues 24–27 (YGSQ), Arg-48, Ser-51, Thr-53, and 83–86 (DELQ). Residue His-108 is part of the active site. Gly-134 is a binding site for NADP(+). The 146-residue stretch at 183 to 328 (TFKEECETDL…GKLRAMMPWI (146 aa)) folds into the KARI C-terminal knotted domain. 4 residues coordinate Mg(2+): Asp-191, Glu-195, Glu-227, and Glu-231. Ser-252 lines the substrate pocket.

Belongs to the ketol-acid reductoisomerase family. Mg(2+) serves as cofactor.

It catalyses the reaction (2R)-2,3-dihydroxy-3-methylbutanoate + NADP(+) = (2S)-2-acetolactate + NADPH + H(+). It carries out the reaction (2R,3R)-2,3-dihydroxy-3-methylpentanoate + NADP(+) = (S)-2-ethyl-2-hydroxy-3-oxobutanoate + NADPH + H(+). It participates in amino-acid biosynthesis; L-isoleucine biosynthesis; L-isoleucine from 2-oxobutanoate: step 2/4. It functions in the pathway amino-acid biosynthesis; L-valine biosynthesis; L-valine from pyruvate: step 2/4. Involved in the biosynthesis of branched-chain amino acids (BCAA). Catalyzes an alkyl-migration followed by a ketol-acid reduction of (S)-2-acetolactate (S2AL) to yield (R)-2,3-dihydroxy-isovalerate. In the isomerase reaction, S2AL is rearranged via a Mg-dependent methyl migration to produce 3-hydroxy-3-methyl-2-ketobutyrate (HMKB). In the reductase reaction, this 2-ketoacid undergoes a metal-dependent reduction by NADPH to yield (R)-2,3-dihydroxy-isovalerate. This is Ketol-acid reductoisomerase (NADP(+)) from Brucella abortus (strain S19).